The following is a 269-amino-acid chain: Lipid II flippase Amj (269 aa).

Transmembrane regions (helical) follow at residues 1–21 (MHVITTQVLFIFCFLLLIHSI), 31–51 (SGARVGFIASALSLFNVMVIV), 84–104 (FLIFGSTVGTILGIILLPSFV), 105–125 (ALFSRAIIHLAGGGGSVFQVF), 161–181 (LFVINMLITSIYTIGVLSALY), 192–212 (TAVMASGLINGIATMLLAIFV), and 245–265 (VAGTLLAQLMFIPGAYYIAWL).

The protein belongs to the Amj family.

The protein resides in the cell membrane. It participates in cell wall biogenesis; peptidoglycan biosynthesis. Its function is as follows. Involved in peptidoglycan biosynthesis. Transports lipid-linked peptidoglycan precursors from the inner to the outer leaflet of the cytoplasmic membrane. May serve as a defense mechanism against naturally occurring MurJ antagonists. The polypeptide is Lipid II flippase Amj (Bacillus subtilis (strain 168)).